The chain runs to 653 residues: Polyadenylate-binding protein, cytoplasmic and nuclear (653 aa).

The span at 1–10 (MPSTDLKKQA) shows a compositional bias: basic and acidic residues. A disordered region spans residues 1–77 (MPSTDLKKQA…SVATPSGTAP (77 aa)). The segment covering 17-27 (DVNTNNEAVES) has biased composition (polar residues). The segment covering 53-68 (AAEPSESTSTPTNASS) has biased composition (low complexity). In terms of domain architecture, RRM 1 spans 80–158 (ASLYVGELDP…RPCRIMWSQR (79 aa)). A Phosphothreonine modification is found at T167. RRM domains are found at residues 168-245 (GNVF…HHVS), 261-338 (TNVY…RAQK), and 364-441 (VNLF…LAQR). Positions 569–646 (PERFTAADLA…AIGVLQEFVD (78 aa)) constitute a PABC domain.

It belongs to the polyadenylate-binding protein type-1 family. In terms of assembly, interacts with cid13.

The protein resides in the cytoplasm. It localises to the nucleus. Functionally, binds the poly(A) tail of mRNA. Appears to be an important mediator of the multiple roles of the poly(A) tail in mRNA biogenesis, stability and translation. In the nucleus, involved in both mRNA cleavage and polyadenylation. Is also required for efficient mRNA export to the cytoplasm. Acts in concert with a poly(A)-specific nuclease (PAN) to affect poly(A) tail shortening, which may occur concomitantly with either nucleocytoplasmic mRNA transport or translational initiation. In the cytoplasm, stimulates translation initiation and regulates mRNA decay through translation termination-coupled poly(A) shortening, probably mediated by PAN. The sequence is that of Polyadenylate-binding protein, cytoplasmic and nuclear (pab1) from Schizosaccharomyces pombe (strain 972 / ATCC 24843) (Fission yeast).